The primary structure comprises 200 residues: Probable nicotinate-nucleotide adenylyltransferase (200 aa).

The protein belongs to the NadD family.

The catalysed reaction is nicotinate beta-D-ribonucleotide + ATP + H(+) = deamido-NAD(+) + diphosphate. The protein operates within cofactor biosynthesis; NAD(+) biosynthesis; deamido-NAD(+) from nicotinate D-ribonucleotide: step 1/1. Catalyzes the reversible adenylation of nicotinate mononucleotide (NaMN) to nicotinic acid adenine dinucleotide (NaAD). The protein is Probable nicotinate-nucleotide adenylyltransferase of Clostridium tetani (strain Massachusetts / E88).